The chain runs to 150 residues: Ribonuclease H (150 aa).

Residues 2 to 143 (PAPILDIFVD…ADELANRAIE (142 aa)) form the RNase H type-1 domain. Mg(2+)-binding residues include D11, E49, D71, and D135.

It belongs to the RNase H family. Monomer. The cofactor is Mg(2+).

Its subcellular location is the cytoplasm. It catalyses the reaction Endonucleolytic cleavage to 5'-phosphomonoester.. Its function is as follows. Endonuclease that specifically degrades the RNA of RNA-DNA hybrids. This is Ribonuclease H from Dichelobacter nodosus (strain VCS1703A).